The chain runs to 231 residues: Cytidylate kinase (231 aa).

Residue 18–26 (GPSGTGKSS) coordinates ATP.

The protein belongs to the cytidylate kinase family. Type 1 subfamily.

It localises to the cytoplasm. It catalyses the reaction CMP + ATP = CDP + ADP. It carries out the reaction dCMP + ATP = dCDP + ADP. This Streptomyces avermitilis (strain ATCC 31267 / DSM 46492 / JCM 5070 / NBRC 14893 / NCIMB 12804 / NRRL 8165 / MA-4680) protein is Cytidylate kinase.